The following is a 204-amino-acid chain: Octanoyltransferase (204 aa).

In terms of domain architecture, BPL/LPL catalytic spans 30-204 (CETPDEIWLL…QSFINQLTDV (175 aa)). Substrate is bound by residues 69-76 (RGGQITYH), 136-138 (SLG), and 149-151 (GIA). Residue C167 is the Acyl-thioester intermediate of the active site.

This sequence belongs to the LipB family.

The protein resides in the cytoplasm. It catalyses the reaction octanoyl-[ACP] + L-lysyl-[protein] = N(6)-octanoyl-L-lysyl-[protein] + holo-[ACP] + H(+). The protein operates within protein modification; protein lipoylation via endogenous pathway; protein N(6)-(lipoyl)lysine from octanoyl-[acyl-carrier-protein]: step 1/2. In terms of biological role, catalyzes the transfer of endogenously produced octanoic acid from octanoyl-acyl-carrier-protein onto the lipoyl domains of lipoate-dependent enzymes. Lipoyl-ACP can also act as a substrate although octanoyl-ACP is likely to be the physiological substrate. This is Octanoyltransferase from Nitrosomonas europaea (strain ATCC 19718 / CIP 103999 / KCTC 2705 / NBRC 14298).